Here is a 312-residue protein sequence, read N- to C-terminus: Erlin (312 aa).

The Cytoplasmic segment spans residues 1 to 3 (MLT). Residues 4–24 (ELALGLFALWIAIFSQALHKI) traverse the membrane as a helical segment. At 25 to 312 (EEGHVGVYYR…FVMGTTQQTV (288 aa)) the chain is on the lumenal side. The N-linked (GlcNAc...) asparagine glycan is linked to Asn104.

The protein belongs to the band 7/mec-2 family. As to quaternary structure, seems to form a multimeric complex. In terms of tissue distribution, expressed in the germline only.

It localises to the endoplasmic reticulum membrane. The sequence is that of Erlin from Caenorhabditis elegans.